The chain runs to 385 residues: Probable protein phosphatase 2C 79 (385 aa).

An N-terminal signal peptide occupies residues M1 to S18. The region spanning D47–L356 is the PPM-type phosphatase domain. Phosphoserine is present on S76. Mn(2+) is bound by residues D87, G88, D288, and D347.

The protein belongs to the PP2C family. Requires Mg(2+) as cofactor. It depends on Mn(2+) as a cofactor.

The enzyme catalyses O-phospho-L-seryl-[protein] + H2O = L-seryl-[protein] + phosphate. It carries out the reaction O-phospho-L-threonyl-[protein] + H2O = L-threonyl-[protein] + phosphate. Functionally, may dephosphorylate and repress plasma membrane H(+)-ATPases (PM H(+)-ATPases, e.g. AHA1 and AHA2), thus influencing negatively plant growth and fitness. In Arabidopsis thaliana (Mouse-ear cress), this protein is Probable protein phosphatase 2C 79.